The primary structure comprises 225 residues: Probable septum site-determining protein MinC (225 aa).

It belongs to the MinC family. Interacts with MinD and FtsZ.

In terms of biological role, cell division inhibitor that blocks the formation of polar Z ring septums. Rapidly oscillates between the poles of the cell to destabilize FtsZ filaments that have formed before they mature into polar Z rings. Prevents FtsZ polymerization. In Listeria monocytogenes serotype 4b (strain CLIP80459), this protein is Probable septum site-determining protein MinC.